The sequence spans 394 residues: Alcohol dehydrogenase-like 3 (394 aa).

Cys48, Thr50, His71, Cys101, Cys104, Cys107, Cys115, and Cys188 together coordinate Zn(2+). Thr50 and His71 together coordinate an alcohol. Thr50 is a binding site for NAD(+). NAD(+) contacts are provided by residues 213–218 (GLGSVG), Asp237, Lys242, Thr283, Val306, 306–308 (VGI), Phe333, and Arg383.

The protein belongs to the zinc-containing alcohol dehydrogenase family. Class-III subfamily. In terms of assembly, homodimer. The cofactor is Zn(2+).

The protein localises to the cytoplasm. It catalyses the reaction a primary alcohol + NAD(+) = an aldehyde + NADH + H(+). The enzyme catalyses a secondary alcohol + NAD(+) = a ketone + NADH + H(+). This chain is Alcohol dehydrogenase-like 3, found in Arabidopsis thaliana (Mouse-ear cress).